The sequence spans 352 residues: MVFRIASSPYTHNQRQTSRIMLLVLIAALPGIAAQTWFFGWGTLFQIVLAAITALVAEAIVLRLRKQSVASHLQDYSALLTGLLLAVSIPPLAPWWMVVLGTGFAIIIAKQLYGGLGQNPFNPAMIGYVVLLISFPVQMTSWLPPYEIAATTPDILDTLRMIFSGHTASGGDMTLLRIGIDGISQATPLDTFKTSLRAGHSVEQIMQYPIYSGALAGVGWQWVNLAWLVGGVFLLWQKAIRWHIPVSFLLTLALCAALGWLFSPATLASPQLHLLSGATMLGAFFILTDPVTASTTNRGRLIFGALAGVLVWLIRSFGGYPDGVAFAVLLANITVPLIDYYTRPRVYGHRKG.

4 consecutive transmembrane segments (helical) span residues 20-40 (IMLL…WFFG), 42-62 (GTLF…AIVL), 69-91 (VASH…SIPP), and 123-143 (PAMI…TSWL). Residue Thr-187 is modified to FMN phosphoryl threonine. 5 helical membrane-spanning segments follow: residues 215-235 (LAGV…VFLL), 242-262 (WHIP…GWLF), 267-287 (LASP…FFIL), 301-321 (LIFG…GGYP), and 322-342 (DGVA…DYYT).

Belongs to the NqrB/RnfD family. As to quaternary structure, the complex is composed of six subunits: RsxA, RsxB, RsxC, RsxD, RsxE and RsxG. Requires FMN as cofactor.

The protein localises to the cell inner membrane. Its function is as follows. Part of a membrane-bound complex that couples electron transfer with translocation of ions across the membrane. Required to maintain the reduced state of SoxR. This Salmonella typhi protein is Ion-translocating oxidoreductase complex subunit D.